Here is an 83-residue protein sequence, read N- to C-terminus: Urotensin-2 (83 aa).

Positions 49 to 71 (EVLLEKQSLLNPFSRVFGIRKQF) are excised as a propeptide. The cysteines at positions 77 and 82 are disulfide-linked.

It belongs to the urotensin-2 family.

The protein localises to the secreted. Urotensin is found in the teleost caudal neurosecretory system. It has a suggested role in osmoregulation and as a corticotropin-releasing factor. The non-hormonal portion of this precursor may be a urotensin binding protein, urophysin. In Platichthys flesus (European flounder), this protein is Urotensin-2.